Reading from the N-terminus, the 121-residue chain is NADPH-dependent 7-cyano-7-deazaguanine reductase (121 aa).

The Thioimide intermediate role is filled by cysteine 36. The active-site Proton donor is aspartate 43. Residues 58–60 and 77–78 each bind substrate; these read VEL and YE.

It belongs to the GTP cyclohydrolase I family. QueF type 1 subfamily.

Its subcellular location is the cytoplasm. The catalysed reaction is 7-aminomethyl-7-carbaguanine + 2 NADP(+) = 7-cyano-7-deazaguanine + 2 NADPH + 3 H(+). It functions in the pathway tRNA modification; tRNA-queuosine biosynthesis. Functionally, catalyzes the NADPH-dependent reduction of 7-cyano-7-deazaguanine (preQ0) to 7-aminomethyl-7-deazaguanine (preQ1). This is NADPH-dependent 7-cyano-7-deazaguanine reductase from Rhodopirellula baltica (strain DSM 10527 / NCIMB 13988 / SH1).